Consider the following 435-residue polypeptide: Elongation factor 1-alpha (435 aa).

In terms of domain architecture, tr-type G spans 5–226 (KTHINLVVIG…DTMEPPKRPT (222 aa)). The tract at residues 14–21 (GHVDSGKS) is G1. 14–21 (GHVDSGKS) is a binding site for GTP. The G2 stretch occupies residues 70-74 (GITID). The segment at 91-94 (DAPG) is G3. GTP-binding positions include 91–95 (DAPGH) and 151–154 (NKMD). Residues 151-154 (NKMD) form a G4 region. The segment at 190–192 (SGF) is G5.

This sequence belongs to the TRAFAC class translation factor GTPase superfamily. Classic translation factor GTPase family. EF-Tu/EF-1A subfamily.

Its subcellular location is the cytoplasm. Its function is as follows. This protein promotes the GTP-dependent binding of aminoacyl-tRNA to the A-site of ribosomes during protein biosynthesis. This Cryptosporidium parvum protein is Elongation factor 1-alpha.